Consider the following 283-residue polypeptide: Putative cuticle collagen 79 (283 aa).

Residues 59-283 (FKQQSSPPSP…ARSISKVAIQ (225 aa)) are disordered. Triple-helical region stretches follow at residues 94 to 122 (GPPG…ENGG), 139 to 201 (GPRG…PGRK), and 204 to 269 (GEAG…DGAY). Positions 137–146 (PPGPRGPPGP) are enriched in pro residues. Over residues 226 to 240 (TDGDDGVDGQPGDEG) the composition is skewed to acidic residues. Positions 253-265 (PQGEQGTEGQPGT) are enriched in low complexity.

The protein belongs to the cuticular collagen family. Collagen polypeptide chains are complexed within the cuticle by disulfide bonds and other types of covalent cross-links.

Its function is as follows. Nematode cuticles are composed largely of collagen-like proteins. The cuticle functions both as an exoskeleton and as a barrier to protect the worm from its environment. In Caenorhabditis elegans, this protein is Putative cuticle collagen 79 (col-79).